The following is an 828-amino-acid chain: MDDLRGFLRQAGQEFLNAAGEAAMGAAKDVVGSVINEIFIKKEADTKRVLPSIKNMRVLGEKSSSLGPYSEVQDYETILNSCLASGSLFEDPLFPASNESLQFSRRPDRHIEWLRPHEIAENPQFFVEGYSRFDVQQGELGDCWLLAATANLTQESNLFFRVIPAEQSFEENYAGIFHFRFWQYGKWVDVIIDDRLPTYNGELMYMHSTEKNEFWSALLEKAYAKLHGSYEALKGGSTCEAMEDFTGGVSEWYDLKEAPGNLFTILQKAAERNSMMGCSIEPDPNVTEAETPQGLIRGHAYSITKVCLIDIVTPNRQGKIPMIRMRNPWGNEAEWNGPWSDSSPEWRYIPEEQKAEIGLTFDRDGEFWMSFQDFLNHFDRVEICNLSPDSLTEDQQNSGKRKWEMSMYEGEWTPGVTAGGCRNFLDTFWHNPQYIITLVDPDEEDEEGQCTVIVALMQKNRRSKRNMGMECLTIGFAIYSLNDRELENRPQGLNFFRYKSSVGRSPHFINTREVCARFKLPPGHYLIVPSTFDPNEEGEFIIRVFSETQNNMEENDDHVGYGGKADTITPGFPTPKPIDPQKEGLRRLFDSIAGKDMEVDWMELKRILDHSMRDDLPKPVVFNRFSNNMAFETQAAGPGDDGAGACGLLSLICGPFLKGTPFEEQLGMNDQSNKRLIGDNPADGGPVTANAIVDETHGFSKDVCRSMVAMLDADKSGKLGFEEFETLLSEIAKWKAIFKVYDVENTGRVSGFQLREALNSAGYHLNNRVLNVLGHRYGSRDGKIAFDDFIMCAVKIKTYIDIFKERDTEKNETATFTLEEWIERTIYS.

In terms of domain architecture, EF-hand 1 spans 1–14 (MDDLRGFLRQAGQE). Residues 88-387 (LFEDPLFPAS…FDRVEICNLS (300 aa)) enclose the Calpain catalytic domain. Residues cysteine 143, histidine 299, and asparagine 327 contribute to the active site. Residues 388-557 (PDSLTEDQQN…TQNNMEENDD (170 aa)) are domain III. The segment at 558-577 (HVGYGGKADTITPGFPTPKP) is linker. Residues 578–828 (IDPQKEGLRR…EEWIERTIYS (251 aa)) are domain IV. EF-hand domains are found at residues 579–614 (DPQK…SMRD), 699–734 (FSKD…IAKW), 729–764 (SEIA…AGYH), and 764–799 (HLNN…IKTY). Residues aspartate 712, aspartate 714, serine 716, lysine 718, glutamate 723, aspartate 742, threonine 746, arginine 748, and glutamine 753 each coordinate Ca(2+).

The protein belongs to the peptidase C2 family. Undergoes calcium-dependent autolytic cleavage between Lys-54 and Asn-55, which is necessary for activation of the protein. In terms of tissue distribution, localized to the anterior and posterior embryonic poles just after fertilization. Becomes distributed around the polar buds and just below the pole cells of the posterior pole during cleavage cycles. During these nuclear divisions anterior localization disappears. Localized to actin caps that underlie the plasma membrane, immediately above each nucleus at cleavage cycles 8 and 9. Localized to a small set of nerve, midgut and blood cells in adults.

The protein resides in the cytoplasm. Activated by millimolar concentrations of calcium, and by phosphatidylinositol 4,5-diphosphate, phosphatidylinositol 4-monophosphate, phosphatidylinositol and phosphatidic acid. Functionally, calcium-regulated non-lysosomal thiol-protease. Involved in the organization of the actin-related cytoskeleton during embryogenesis. In Drosophila melanogaster (Fruit fly), this protein is Calpain-A (CalpA).